The following is a 172-amino-acid chain: Diphosphoinositol polyphosphate phosphohydrolase 1 (172 aa).

Met1 bears the N-acetylmethionine mark. Substrate contacts are provided by residues Arg10, 18-20, and 39-41; these read KKR and SSR. Residues 17-144 enclose the Nudix hydrolase domain; the sequence is YKKRAACLCF…VQASYFETLR (128 aa). The Mg(2+) site is built by Gly50 and Glu66. The short motif at 51–72 is the Nudix box element; sequence GGMEPEEEPGTAAVREVCEEAG. Residue Glu69 is the Proton acceptor of the active site. Position 70 (Glu70) interacts with Mg(2+). Substrate is bound by residues 89-91, Arg115, and Lys133; that span reads RKH.

This sequence belongs to the Nudix hydrolase family. DIPP subfamily. As to quaternary structure, monomer. It depends on Mg(2+) as a cofactor. Requires Mn(2+) as cofactor. Zn(2+) serves as cofactor.

It localises to the cytoplasm. Its subcellular location is the nucleus. The catalysed reaction is diphospho-myo-inositol polyphosphate + H2O = myo-inositol polyphosphate + phosphate.. The enzyme catalyses 5-diphospho-1D-myo-inositol 1,2,3,4,6-pentakisphosphate + H2O = 1D-myo-inositol hexakisphosphate + phosphate + H(+). It catalyses the reaction 3,5-bis(diphospho)-1D-myo-inositol 1,2,4,6-tetrakisphosphate + H2O = 3-diphospho-1D-myo-inositol 1,2,4,5,6-pentakisphosphate + phosphate + 2 H(+). It carries out the reaction [phosphate](n+1) + n H2O = (n+1) phosphate + n H(+). The catalysed reaction is P(1),P(5)-bis(5'-adenosyl) pentaphosphate + H2O = ADP + ATP + 2 H(+). The enzyme catalyses P(1),P(6)-bis(5'-adenosyl) hexaphosphate + H2O = 2 ATP + 2 H(+). It catalyses the reaction P(1),P(4)-bis(5'-adenosyl) tetraphosphate + H2O = AMP + ATP + 2 H(+). It carries out the reaction a 5'-end (N(7)-methyl 5'-triphosphoguanosine)-ribonucleoside in mRNA + H2O = N(7)-methyl-GMP + a 5'-end diphospho-ribonucleoside in mRNA + 2 H(+). The catalysed reaction is a 5'-end (N(7)-methyl 5'-triphosphoguanosine)-ribonucleoside in mRNA + H2O = N(7)-methyl-GDP + a 5'-end phospho-ribonucleoside in mRNA + 2 H(+). Its function is as follows. Cleaves a beta-phosphate from the diphosphate groups in PP-InsP5 (diphosphoinositol pentakisphosphate) and [PP]2-InsP4 (bisdiphosphoinositol tetrakisphosphate), suggesting that it may play a role in signal transduction. InsP6 (inositol hexakisphosphate) is not a substrate. Also able to catalyze the hydrolysis of dinucleoside oligophosphates, with diadenosine 5',5'''-P1,P6-hexaphosphate (Ap6A) and diadenosine 5',5'''- P1,P5-pentaphosphate (Ap5A) being the preferred substrates. The major reaction products are ADP and p4a from Ap6A and ADP and ATP from Ap5A. Also able to hydrolyze 5- phosphoribose 1-diphosphate. Acts as a decapping enzyme that can hydrolyze both monomethylated and unmethylated capped RNAs. Hydrolyzes monomethylated capped RNA after both the alpha- and beta-phosphates generating m7GMP + ppRNA and m7GDP + pRNA. Modulates the stability of a subset of mRNAs implicated in cell motility. Divalent cations zinc, magnesium and manganese determine its substrate specificity. Exhibits diphosphoinositol polyphosphate phosphohydrolase in the presence of magnesium ions, diadenosine hexaphosphate hydrolase activity in the presence of manganese ions and endopolyphosphatase activity in the presence of zinc ions. Plays an important role in limiting DNA damage and maintaining cell survival upon oxidative stress via its endopolyphosphatase activity. The polypeptide is Diphosphoinositol polyphosphate phosphohydrolase 1 (Bos taurus (Bovine)).